The following is a 127-amino-acid chain: UPF0102 protein Geob_1494 (127 aa).

Belongs to the UPF0102 family.

This is UPF0102 protein Geob_1494 from Geotalea daltonii (strain DSM 22248 / JCM 15807 / FRC-32) (Geobacter daltonii).